A 118-amino-acid polypeptide reads, in one-letter code: Inner membrane protein YhaI (118 aa).

The Periplasmic segment spans residues 1–25 (MQWYLSVLKNYVGFSGRARRKEYWM). The helical transmembrane segment at 26–46 (FTLINAIVGAIINVIQLILGL) threads the bilayer. E47 is a topological domain (cytoplasmic). Residues 48-68 (LPYLSMLYLLATFLPVLALAI) traverse the membrane as a helical segment. At 69 to 77 (RRLHDTDRS) the chain is on the periplasmic side. Residues 78–98 (GAWALLFFVPFIGWLVLLVFF) form a helical membrane-spanning segment. Topologically, residues 99–118 (CTEGTSGSNRYGNDPKFGSN) are cytoplasmic.

To E.coli YhaH.

Its subcellular location is the cell inner membrane. In Escherichia coli O157:H7, this protein is Inner membrane protein YhaI (yhaI).